Here is a 163-residue protein sequence, read N- to C-terminus: MGIDPGLTRCGLSVVQAGKGRAVYPVAVGVVRTPSDMPVEQRLNKLFDAVEQWFDDYQPHVVALERVFERSNVSTVMNTAHASGVLMLAAARRGVDVHMYTPSEVKKSISGNGRADKAQMTRMITRILGLSEAPKPPDAADALALAVCHCWRAPLNHLVKGKL.

Catalysis depends on residues aspartate 4, glutamate 65, and aspartate 138. Residues aspartate 4, glutamate 65, and aspartate 138 each coordinate Mg(2+).

This sequence belongs to the RuvC family. As to quaternary structure, homodimer which binds Holliday junction (HJ) DNA. The HJ becomes 2-fold symmetrical on binding to RuvC with unstacked arms; it has a different conformation from HJ DNA in complex with RuvA. In the full resolvosome a probable DNA-RuvA(4)-RuvB(12)-RuvC(2) complex forms which resolves the HJ. Mg(2+) is required as a cofactor.

Its subcellular location is the cytoplasm. It carries out the reaction Endonucleolytic cleavage at a junction such as a reciprocal single-stranded crossover between two homologous DNA duplexes (Holliday junction).. The RuvA-RuvB-RuvC complex processes Holliday junction (HJ) DNA during genetic recombination and DNA repair. Endonuclease that resolves HJ intermediates. Cleaves cruciform DNA by making single-stranded nicks across the HJ at symmetrical positions within the homologous arms, yielding a 5'-phosphate and a 3'-hydroxyl group; requires a central core of homology in the junction. The consensus cleavage sequence is 5'-(A/T)TT(C/G)-3'. Cleavage occurs on the 3'-side of the TT dinucleotide at the point of strand exchange. HJ branch migration catalyzed by RuvA-RuvB allows RuvC to scan DNA until it finds its consensus sequence, where it cleaves and resolves the cruciform DNA. In Corynebacterium jeikeium (strain K411), this protein is Crossover junction endodeoxyribonuclease RuvC.